The primary structure comprises 336 residues: Ketoreductase adrE (336 aa).

Position 171 (Y171) interacts with NADP(+).

It belongs to the NAD(P)-dependent epimerase/dehydratase family. Dihydroflavonol-4-reductase subfamily.

It participates in secondary metabolite biosynthesis; terpenoid biosynthesis. Its function is as follows. Ketoreductase; part of the gene cluster that mediates the biosynthesis of andrastins, meroterpenoid compounds that exhibit inhibitory activity against ras farnesyltransferase, suggesting that they could be promising leads for antitumor agents. The first step of the pathway is the synthesis of 3,5-dimethylorsellinic acid (DMOA) by the polyketide synthase adrD via condensation of one acetyl-CoA starter unit with 3 malonyl-CoA units and 2 methylations. DMAO is then converted to farnesyl-DMAO by the prenyltransferase adrG. The methyltransferase adrK catalyzes the methylation of the carboxyl group of farnesyl-DMAO to farnesyl-DMAO methyl ester which is further converted to epoxyfarnesyl-DMAO methyl ester by the FAD-dependent monooxygenase adrH. The terpene cyclase adrI then catalyzes the carbon skeletal rearrangement to generate the andrastin E, the first compound in the pathway having the andrastin scaffold, with the tetracyclic ring system. The post-cyclization tailoring enzymes adrF, adrE, adrJ, and adrA, are involved in the conversion of andrastin E into andrastin A. The short chain dehydrogenase adrF is responsible for the oxidation of the C-3 a hydroxyl group of andrastin E to yield the corresponding ketone, andrastin D. The ketoreductase adrE stereoselectively reduces the carbonyl moiety to reverse the stereochemistry of the C-3 position to yield andrastin F. The acetyltransferase adrJ is the acetyltransferase that attaches the acetyl group to the C-3 hydroxyl group of andrastin F to yield andrastin C. Finally, the cytochrome P450 monooxygenase adrA catalyzes two sequential oxidation reactions of the C-23 methyl group, to generate the corresponding alcohol andrastin B, and aldehyde andrastin A. The protein is Ketoreductase adrE of Penicillium roqueforti.